Reading from the N-terminus, the 657-residue chain is Serine/threonine-protein kinase BUR1 (657 aa).

The region spanning 60-366 is the Protein kinase domain; it reads YREDEKLGQG…AMSAKHHPWF (307 aa). ATP contacts are provided by residues 66-74 and Lys-89; that span reads LGQGTFGEV. Asp-195 (proton acceptor) is an active-site residue. Thr-240 carries the post-translational modification Phosphothreonine; by CAK. Ser-400 is modified (phosphoserine). Thr-405 bears the Phosphothreonine mark. Residues 414-657 form a disordered region; sequence KGESPVVKNL…FQNSDIADLY (244 aa). Ser-417 is modified (phosphoserine). Positions 489–501 are enriched in low complexity; it reads NNSSRNNRFSGNS. Composition is skewed to polar residues over residues 535–552, 564–595, and 614–625; these read SRYQ…SPND, PETN…NGSR, and ISPSQGQHQLTS. The span at 627–649 shows a compositional bias: basic and acidic residues; it reads PIEKKNGSFKDERAKPDESKEFQ. Ser-634 is modified (phosphoserine).

Belongs to the protein kinase superfamily. CMGC Ser/Thr protein kinase family. CDC2/CDKX subfamily. As to quaternary structure, belongs to the BUR kinase complex composed of SGV1/BUR1 and BUR2. Interacts with BUR2 and RBP1.

It is found in the nucleus. The catalysed reaction is L-seryl-[protein] + ATP = O-phospho-L-seryl-[protein] + ADP + H(+). The enzyme catalyses L-threonyl-[protein] + ATP = O-phospho-L-threonyl-[protein] + ADP + H(+). It carries out the reaction [DNA-directed RNA polymerase] + ATP = phospho-[DNA-directed RNA polymerase] + ADP + H(+). In terms of biological role, serine/threonine-protein kinase component of the BUR kinase complex involved in transcription regulation. This complex phosphorylates 'Ser-120' of the UBC2/RAD6 ubiquitin-conjugating enzyme (E2), leading to monoubiquitination of histone H2B, the localization of the PAF1 complex to the chromatin, and the silencing of telomeric-associated genes. Also required for histone H3 'Lys-4' trimethylation. May phosphorylate the 'Ser-5' of the RBP1 carboxy-terminal domain (CTD) repeats. Necessary for the recovery from pheromone-induced growth arrest in the cell cycle G1 phase. The kinase activity of the complex requires the presence of BUR2. This Saccharomyces cerevisiae (strain ATCC 204508 / S288c) (Baker's yeast) protein is Serine/threonine-protein kinase BUR1 (SGV1).